The chain runs to 511 residues: Ribose import ATP-binding protein RbsA (511 aa).

2 ABC transporter domains span residues 13-249 (VSMD…VGRA) and 260-503 (ALGE…AGIA). 45–52 (GENGAGKS) contributes to the ATP binding site.

This sequence belongs to the ABC transporter superfamily. Ribose importer (TC 3.A.1.2.1) family. The complex is composed of an ATP-binding protein (RbsA), two transmembrane proteins (RbsC) and a solute-binding protein (RbsB).

The protein localises to the cell inner membrane. The catalysed reaction is D-ribose(out) + ATP + H2O = D-ribose(in) + ADP + phosphate + H(+). Part of the ABC transporter complex RbsABC involved in ribose import. Responsible for energy coupling to the transport system. The polypeptide is Ribose import ATP-binding protein RbsA (Roseobacter denitrificans (strain ATCC 33942 / OCh 114) (Erythrobacter sp. (strain OCh 114))).